The chain runs to 864 residues: Leucine--tRNA ligase (864 aa).

A 'HIGH' region motif is present at residues 42-52; it reads PYPSGKLHMGH. The 'KMSKS' region signature appears at 624–628; it reads KMSKS. Lysine 627 is an ATP binding site.

It belongs to the class-I aminoacyl-tRNA synthetase family.

Its subcellular location is the cytoplasm. It catalyses the reaction tRNA(Leu) + L-leucine + ATP = L-leucyl-tRNA(Leu) + AMP + diphosphate. This is Leucine--tRNA ligase from Burkholderia lata (strain ATCC 17760 / DSM 23089 / LMG 22485 / NCIMB 9086 / R18194 / 383).